Consider the following 130-residue polypeptide: Protein ApaG (130 aa).

Residues 3-127 (RAVTRNIEVQ…FSLDLPGTRR (125 aa)) form the ApaG domain.

The sequence is that of Protein ApaG from Mesorhizobium japonicum (strain LMG 29417 / CECT 9101 / MAFF 303099) (Mesorhizobium loti (strain MAFF 303099)).